A 165-amino-acid polypeptide reads, in one-letter code: 3-isopropylmalate dehydratase small subunit (165 aa).

The protein belongs to the LeuD family. LeuD type 2 subfamily. In terms of assembly, heterodimer of LeuC and LeuD.

It catalyses the reaction (2R,3S)-3-isopropylmalate = (2S)-2-isopropylmalate. Its pathway is amino-acid biosynthesis; L-leucine biosynthesis; L-leucine from 3-methyl-2-oxobutanoate: step 2/4. In terms of biological role, catalyzes the isomerization between 2-isopropylmalate and 3-isopropylmalate, via the formation of 2-isopropylmaleate. This chain is 3-isopropylmalate dehydratase small subunit, found in Saccharolobus islandicus (strain M.16.27) (Sulfolobus islandicus).